Here is an 860-residue protein sequence, read N- to C-terminus: Leucine--tRNA ligase (860 aa).

The 'HIGH' region motif lies at 42-52; the sequence is PYPSGRLHMGH. Residues 619–623 carry the 'KMSKS' region motif; the sequence is KMSKS. Lysine 622 contacts ATP.

The protein belongs to the class-I aminoacyl-tRNA synthetase family.

The protein localises to the cytoplasm. It carries out the reaction tRNA(Leu) + L-leucine + ATP = L-leucyl-tRNA(Leu) + AMP + diphosphate. The sequence is that of Leucine--tRNA ligase from Escherichia coli (strain SE11).